Here is a 985-residue protein sequence, read N- to C-terminus: MSRIESLTRARIDRSKEQATKTREKEKMKEAKDARYTNGHLFTTISVSGMTMCYACNKSITAKEALICPTCNVTIHNRCKDTLANCTKVKQKQQKAALLRNNTALQSVSLRSKTTTRERPTSAIYPSDSFRQSLLGSRRGLSSLSLAKSVSTTNIAGHFNDESPLGLRQILSQSTDSLNMRNRTLSVESLIDEGVEVFYNELMSDFEMDEKDFEADSWSLAVDSSFLQQHKKEVMKKQDVIYELIQTELHHVRTLKIMTRLFRTGMLEELQMEPEVVQGLFPCVDELSDIHTRFLSQLLERRRQALCPGSTRNFVIHRLGDLLISQFSGSNAEQMRKTYSEFCSRHTKALKLYKELYARDKRFQQFIRKMTRSAVLKRHGVQECILLVTQRITKYPVLINRILQNSHGIEEEYQDLAAALGLVKELLSNVDQDVHELEKEARLQEIYNRMDPRAQTPVPGKGPFGRDELLRRKLIHDGCLLWKTATGRFKDVLLLLMTDVLVFLQEKDQKYIFTSLDKPSVVSLQNLIVRDIANQAKGMFLISSGPPEMYEVHAASRDDRTTWIRVIQQSVRLCPSREDFPLIETEDKAYLRRIKTKLQQKNQALVELLQMNVELFAEMVHFQALKAGFIGMPPPTLPRGLFRLESFESLRGERLLKDALREVEGLKDLLLGPCVDLPLTAREPALPVEADSGSCPGVTANGEARTFNGSIELCRADSDSSQKDRNGNQLRSPQEEALQPLVNLYGLLQGLQAVVVQQERLMEALFPEGPERWEKLSRANSRDGEAGRAAVASVTPEKQATELALLQRQHSLLQEELRRCQRLGEERATEAGSLEARLRESEQARALLEREAEEIRRQLAALGQNEPLPAEAPWARRPLDPRRRSLPAGDALYLSFNPPQPSRGHDRLDLPVTVRSLHRPFDDREAQELGSPEDRLQDSSDPDTCSEEEVSSRLSPPHSPRDFTRMQDIPEETESRDGEPTASES.

A disordered region spans residues 1 to 32 (MSRIESLTRARIDRSKEQATKTREKEKMKEAK). The Phorbol-ester/DAG-type zinc finger occupies 39-86 (GHLFTTISVSGMTMCYACNKSITAKEALICPTCNVTIHNRCKDTLANC). Ser-109, Ser-122, Ser-129, Ser-133, and Ser-137 each carry phosphoserine. The interaction with DYNLT1 stretch occupies residues 131–161 (RQSLLGSRRGLSSLSLAKSVSTTNIAGHFND). Ser-143 carries the post-translational modification Phosphoserine; by PAK4. Phosphoserine occurs at positions 151, 163, 172, 174, and 177. The DH domain occupies 236-433 (KKQDVIYELI…KELLSNVDQD (198 aa)). Lys-354 carries the post-translational modification N6-acetyllysine. The region spanning 473-572 (KLIHDGCLLW…WIRVIQQSVR (100 aa)) is the PH domain. Residues 591 to 615 (LRRIKTKLQQKNQALVELLQMNVEL) adopt a coiled-coil conformation. 2 positions are modified to phosphoserine: Ser-646 and Ser-649. The residue at position 680 (Thr-680) is a Phosphothreonine; by MAPK1 or MAPK3. A phosphoserine mark is found at Ser-692, Ser-710, and Ser-781. Thr-795 bears the Phosphothreonine mark. Residues 797–866 (EKQATELALL…RQLAALGQNE (70 aa)) adopt a coiled-coil conformation. Position 885 is a phosphoserine (Ser-885). 2 disordered regions span residues 890–909 (DALYLSFNPPQPSRGHDRLD) and 918–985 (HRPF…ASES). Tyr-893 is subject to Phosphotyrosine. At Ser-895 the chain carries Phosphoserine; by PAK4. Residues 919 to 938 (RPFDDREAQELGSPEDRLQD) show a composition bias toward basic and acidic residues. 3 positions are modified to phosphoserine: Ser-931, Ser-939, and Ser-940. A compositionally biased stretch (acidic residues) spans 940 to 949 (SDPDTCSEEE). Thr-944 is subject to Phosphothreonine. A phosphoserine mark is found at Ser-946, Ser-951, Ser-952, Ser-955, and Ser-959.

In terms of assembly, found in a complex composed at least of ARHGEF2, NOD2 and RIPK2. Interacts with RIPK2; the interaction mediates tyrosine phosphorylation of RIPK2 by Src kinase CSK. Interacts with RIPK1 and RIPK3. Interacts with YWHAZ/14-3-3 zeta; when phosphorylated at Ser-885. Interacts with the kinases PAK4, AURKA and MAPK1. Interacts with RHOA and RAC1. Interacts with NOD1. Interacts (via the N- terminal zinc finger) with CAPN6 (via domain II). Interacts with DYNLT1. In terms of processing, phosphorylation of Ser-885 by PAK1 induces binding to protein YWHAZ, promoting its relocation to microtubules and the inhibition of its activity. Phosphorylated by AURKA and CDK1 during mitosis, which negatively regulates its activity. Phosphorylation by MAPK1 or MAPK3 increases nucleotide exchange activity. Phosphorylation by PAK4 releases GEF-H1 from the microtubules. Phosphorylated on serine, threonine and tyrosine residues in a RIPK2-dependent manner.

It localises to the cytoplasm. The protein resides in the cytoskeleton. Its subcellular location is the cell junction. It is found in the tight junction. The protein localises to the golgi apparatus. It localises to the spindle. The protein resides in the cytoplasmic vesicle. Functionally, activates Rho-GTPases by promoting the exchange of GDP for GTP. May be involved in epithelial barrier permeability, cell motility and polarization, dendritic spine morphology, antigen presentation, leukemic cell differentiation, cell cycle regulation, innate immune response, and cancer. Binds Rac-GTPases, but does not seem to promote nucleotide exchange activity toward Rac-GTPases. May stimulate instead the cortical activity of Rac. Inactive toward CDC42, TC10, or Ras-GTPases. Forms an intracellular sensing system along with NOD1 for the detection of microbial effectors during cell invasion by pathogens. Involved in innate immune signaling transduction pathway promoting cytokine IL6/interleukin-6 and TNF-alpha secretion in macrophage upon stimulation by bacterial peptidoglycans; acts as a signaling intermediate between NOD2 receptor and RIPK2 kinase. Contributes to the tyrosine phosphorylation of RIPK2 through Src tyrosine kinase leading to NF-kappaB activation by NOD2. Overexpression activates Rho-, but not Rac-GTPases, and increases paracellular permeability. Involved in neuronal progenitor cell division and differentiation. Involved in the migration of precerebellar neurons. The protein is Rho guanine nucleotide exchange factor 2 (Arhgef2) of Rattus norvegicus (Rat).